A 70-amino-acid chain; its full sequence is Translation initiation factor IF-1 (70 aa).

Positions 1-70 (MKNDKLFLTG…LKLGRITQRK (70 aa)) constitute an S1-like domain.

It belongs to the IF-1 family. In terms of assembly, component of the 30S ribosomal translation pre-initiation complex which assembles on the 30S ribosome in the order IF-2 and IF-3, IF-1 and N-formylmethionyl-tRNA(fMet); mRNA recruitment can occur at any time during PIC assembly.

Its subcellular location is the cytoplasm. Its function is as follows. One of the essential components for the initiation of protein synthesis. Stabilizes the binding of IF-2 and IF-3 on the 30S subunit to which N-formylmethionyl-tRNA(fMet) subsequently binds. Helps modulate mRNA selection, yielding the 30S pre-initiation complex (PIC). Upon addition of the 50S ribosomal subunit IF-1, IF-2 and IF-3 are released leaving the mature 70S translation initiation complex. This Mycoplasma genitalium (strain ATCC 33530 / DSM 19775 / NCTC 10195 / G37) (Mycoplasmoides genitalium) protein is Translation initiation factor IF-1.